We begin with the raw amino-acid sequence, 459 residues long: Uterine milk protein (459 aa).

Positions 1–25 are cleaved as a signal peptide; it reads MSHGRMNLALSLVFILCGLFNSIFC. The N-linked (GlcNAc...) asparagine glycan is linked to asparagine 268.

The protein belongs to the serpin family. UTMP subfamily.

This Bos taurus (Bovine) protein is Uterine milk protein.